Reading from the N-terminus, the 389-residue chain is MADNTDNRRSLWGVPEKLQLHIAMLTLQFGYAGFHVVSRAALNMGISKLVFPVYRNIIALLLLLPFAYFLEKKERPAITLNFLIQFFFLALIGITANQGFYLLGLDNTSPTFASSMQNSVPAITFLMAALLRIEKVRINRRDGISKILGTALCVAGASVITLYKGPTIYTPASHLHAHLLTTNSAVLAPLGNAAPKNWTLGCIYLIGHCLSWSGWLVFQAPVLKSYPARLSVTSYTCFFGIIQFLIIAAFCERDSQAWVFHSGWELFTILYAGIVASGIAFAVQIWCIDRGGPVFVAVYQPVQTLVVAIMASIALGEEFYLGGIIGAVLIIAGLYFVLYGKSEERKFAALEKAAIQSSAEHGIERAPVSRNSIKSSITTPLLHQSTDNV.

Helical transmembrane passes span 18 to 38, 49 to 69, 76 to 96, 111 to 131, 143 to 163, 198 to 218, 230 to 250, 266 to 286, 294 to 314, and 319 to 339; these read LQLHIAMLTLQFGYAGFHVVS, LVFPVYRNIIALLLLLPFAYF, PAITLNFLIQFFFLALIGITA, TFASSMQNSVPAITFLMAALL, GISKILGTALCVAGASVITLY, WTLGCIYLIGHCLSWSGWLVF, LSVTSYTCFFGIIQFLIIAAF, LFTILYAGIVASGIAFAVQIW, VFVAVYQPVQTLVVAIMASIA, and FYLGGIIGAVLIIAGLYFVLY. 2 consecutive EamA domains span residues 32 to 161 and 210 to 339; these read AGFH…SVIT and LSWS…FVLY. Ser372 bears the Phosphoserine mark.

The protein belongs to the drug/metabolite transporter (DMT) superfamily. Plant drug/metabolite exporter (P-DME) (TC 2.A.7.4) family. In terms of tissue distribution, mostly expressed in stems and hypocotyls, also present in seedlings, root, leaves, flowers and siliques. Ubiquitous, mostly expressed in vascular tissues and secondary wall-forming cells, including developing xylem vessels and fibers.

The protein localises to the vacuole membrane. Functionally, required for secondary wall formation in fibers, especially in short days conditions. Promotes indole metabolism and transport (e.g. tryptophan, neoglucobrassicin and auxin (indole-3-acetic acid)). May prevent salicylic-acid (SA) accumulation. The polypeptide is Protein WALLS ARE THIN 1 (WAT1) (Arabidopsis thaliana (Mouse-ear cress)).